Reading from the N-terminus, the 146-residue chain is NADH-quinone oxidoreductase subunit A (146 aa).

3 consecutive transmembrane segments (helical) span residues 16 to 36, 68 to 88, and 98 to 118; these read FAIF…GGWF, FYLV…LFAW, and VGFV…VYLV.

This sequence belongs to the complex I subunit 3 family. In terms of assembly, NDH-1 is composed of 13 different subunits. Subunits NuoA, H, J, K, L, M, N constitute the membrane sector of the complex.

The protein localises to the cell inner membrane. The enzyme catalyses a quinone + NADH + 5 H(+)(in) = a quinol + NAD(+) + 4 H(+)(out). In terms of biological role, NDH-1 shuttles electrons from NADH, via FMN and iron-sulfur (Fe-S) centers, to quinones in the respiratory chain. The immediate electron acceptor for the enzyme in this species is believed to be ubiquinone. Couples the redox reaction to proton translocation (for every two electrons transferred, four hydrogen ions are translocated across the cytoplasmic membrane), and thus conserves the redox energy in a proton gradient. The chain is NADH-quinone oxidoreductase subunit A from Enterobacter sp. (strain 638).